The primary structure comprises 145 residues: Protein SprT-like (145 aa).

The region spanning 4 to 140 is the SprT-like domain; the sequence is TNYVQEVSLA…VCGNCHGKLI (137 aa). Histidine 64 is a Zn(2+) binding site. Residue glutamate 65 is part of the active site. Histidine 68 is a Zn(2+) binding site.

This sequence belongs to the SprT family. It depends on Zn(2+) as a cofactor.

It is found in the cytoplasm. The polypeptide is Protein SprT-like (Streptococcus pyogenes serotype M6 (strain ATCC BAA-946 / MGAS10394)).